Reading from the N-terminus, the 437-residue chain is Glutamyl-tRNA reductase (437 aa).

Residues 49–52 (TCNR), Ser109, 114–116 (ETQ), and Gln120 each bind substrate. The active-site Nucleophile is Cys50. NADP(+) is bound at residue 189 to 194 (GAGKMS).

The protein belongs to the glutamyl-tRNA reductase family. In terms of assembly, homodimer.

It carries out the reaction (S)-4-amino-5-oxopentanoate + tRNA(Glu) + NADP(+) = L-glutamyl-tRNA(Glu) + NADPH + H(+). It participates in porphyrin-containing compound metabolism; protoporphyrin-IX biosynthesis; 5-aminolevulinate from L-glutamyl-tRNA(Glu): step 1/2. Its function is as follows. Catalyzes the NADPH-dependent reduction of glutamyl-tRNA(Glu) to glutamate 1-semialdehyde (GSA). This Paenibacillus macerans (Bacillus macerans) protein is Glutamyl-tRNA reductase.